The following is a 461-amino-acid chain: Deoxyguanosinetriphosphate triphosphohydrolase-like protein (461 aa).

The disordered stretch occupies residues 22-41 (ERFLPDPPREKDNRPPFRRD). The segment covering 24–41 (FLPDPPREKDNRPPFRRD) has biased composition (basic and acidic residues). The HD domain maps to 72–285 (RLTHSLEVAQ…MELADDIAYG (214 aa)).

This sequence belongs to the dGTPase family. Type 2 subfamily.

In Haemophilus influenzae (strain PittEE), this protein is Deoxyguanosinetriphosphate triphosphohydrolase-like protein.